The primary structure comprises 324 residues: MCTAITYQSYNNYFGRNFDYEISYNEMVTITPRKYPLVFRKVENLDHHYAIIGITADVESYPLYYDAMNEKGLCIAGLNFAGYADYKKYDADKVNITPFELIPWLLGQFSSVREVKKNIQKLNLVNINFSEQLPLSPLHWLVADKQESIVIESVKEGLKIYDNPVGVLTNNPNFDYQLFNLNNYRALSNSTPQNSFSEKVDLDSYSRGMGGLGLPGDLSSMSRFVRAAFTKLNSLSMQTESGSVSQFFHILGSVEQQKGLCEVTDGKYEYTIYSSCCDMDKGVYYYRTYDNSQINSVSLNHEHLDTTELISYPLRSEAQYYAVN.

The Nucleophile; acyl-thioester intermediate role is filled by C2. C2 and R16 together coordinate deoxycholate. Taurine is bound at residue N79.

Belongs to the peptidase C59 family. Homotetramer. The tetramer consists of a dimer of dimers.

The catalysed reaction is glycocholate + H2O = cholate + glycine. The enzyme catalyses glycodeoxycholate + H2O = deoxycholate + glycine. It catalyses the reaction chenodeoxycholate + glycine = glycochenodeoxycholate + H2O. It carries out the reaction cholate + taurine = taurocholate + H2O. The catalysed reaction is taurodeoxycholate + H2O = deoxycholate + taurine. The enzyme catalyses taurochenodeoxycholate + H2O = chenodeoxycholate + taurine. It catalyses the reaction an L-alpha-amino acid + cholate = an N-choloyl-L-alpha-amino acid + H2O. It carries out the reaction an L-alpha-amino acid + taurocholate = an N-choloyl-L-alpha-amino acid + taurine. The catalysed reaction is glycocholate + an L-alpha-amino acid = an N-choloyl-L-alpha-amino acid + glycine. Its pathway is lipid metabolism; bile acid biosynthesis. Possesses dual functions in bile acid metabolism. Acts as a bile salt hydrolase that catalyzes the deconjugation of glycine- and taurine-linked bile salts, which occurs naturally in the intestines of animals, releasing amino acid residues and deconjugated bile salts (bile acids). Can hydrolyze the amide bond in the bile salts glycocholate (GCA), glycodeoxycholate (GDCA), glycochenodeoxycholate (GCDCA), taurocholate (TCA), taurodeoxycholate (TDCA) and taurochenodeoxycholate (TCDCA). Shows a preference for glycine-conjugated bile acids as substrates. Also acts as an amine N-acyltransferase that conjugates a wide variety of amino acids to conjugated and non-conjugated bile acids, thus producing bacterial bile acid amidates (BBAAs) - also named microbially conjugated bile acids (MCBAs) - in the gastrointestinal tract. These BBAAs may facilitate communication between the microbiota and host through the activation of host ligand-activated transcription factors. This Lactiplantibacillus plantarum (strain ATCC BAA-793 / NCIMB 8826 / WCFS1) (Lactobacillus plantarum) protein is Bile salt hydrolase/transferase.